A 636-amino-acid chain; its full sequence is Carbon monoxide dehydrogenase 1 (636 aa).

[4Fe-4S] cluster-binding residues include cysteine 38, cysteine 46, cysteine 47, cysteine 50, cysteine 55, and cysteine 69. Residues histidine 262, cysteine 297, cysteine 335, cysteine 448, cysteine 478, and cysteine 528 each coordinate [Ni-4Fe-5S] cluster.

Belongs to the Ni-containing carbon monoxide dehydrogenase family. In terms of assembly, homodimer. The cofactor is [4Fe-4S] cluster. [Ni-4Fe-5S] cluster is required as a cofactor.

The protein localises to the cytoplasm. The protein resides in the cell membrane. It catalyses the reaction CO + 2 oxidized [2Fe-2S]-[ferredoxin] + H2O = 2 reduced [2Fe-2S]-[ferredoxin] + CO2 + 2 H(+). Inactivated by O(2). Functionally, CODH oxidizes carbon monoxide coupled, via CooF, to the reduction of a hydrogen cation by a hydrogenase (possibly CooH). The protein is Carbon monoxide dehydrogenase 1 (cooS1) of Carboxydothermus hydrogenoformans (strain ATCC BAA-161 / DSM 6008 / Z-2901).